The chain runs to 424 residues: Imidazolonepropionase (424 aa).

Fe(3+)-binding residues include H81 and H83. Positions 81 and 83 each coordinate Zn(2+). Residues R90, Y153, and H186 each coordinate 4-imidazolone-5-propanoate. Y153 contributes to the N-formimidoyl-L-glutamate binding site. Position 251 (H251) interacts with Fe(3+). Residue H251 coordinates Zn(2+). E254 serves as a coordination point for 4-imidazolone-5-propanoate. D325 provides a ligand contact to Fe(3+). D325 is a Zn(2+) binding site. N327 and G329 together coordinate N-formimidoyl-L-glutamate. T330 serves as a coordination point for 4-imidazolone-5-propanoate.

This sequence belongs to the metallo-dependent hydrolases superfamily. HutI family. Zn(2+) serves as cofactor. It depends on Fe(3+) as a cofactor.

It localises to the cytoplasm. It carries out the reaction 4-imidazolone-5-propanoate + H2O = N-formimidoyl-L-glutamate. It participates in amino-acid degradation; L-histidine degradation into L-glutamate; N-formimidoyl-L-glutamate from L-histidine: step 3/3. Its function is as follows. Catalyzes the hydrolytic cleavage of the carbon-nitrogen bond in imidazolone-5-propanoate to yield N-formimidoyl-L-glutamate. It is the third step in the universal histidine degradation pathway. The chain is Imidazolonepropionase from Syntrophobacter fumaroxidans (strain DSM 10017 / MPOB).